Here is a 58-residue protein sequence, read N- to C-terminus: Small ribosomal subunit protein bS21 (58 aa).

Over residues 32-42 (VRKREHYEKPS) the composition is skewed to basic and acidic residues. Residues 32–58 (VRKREHYEKPSVKKKKKSEAARKRKFK) are disordered. The segment covering 43 to 58 (VKKKKKSEAARKRKFK) has biased composition (basic residues).

Belongs to the bacterial ribosomal protein bS21 family.

This Clostridium botulinum (strain Okra / Type B1) protein is Small ribosomal subunit protein bS21.